We begin with the raw amino-acid sequence, 267 residues long: TKIFALLALHALLVSGTTAAIIPQCSLAPNAIIPQFIPPVTALGNEHLAVQAIRLQQVLSASILQQPIAQLQQHFLAHLTVQTITRRRQQQQQQQQQQQQFLSSLSALAVRNQAAYLQQQLLTSNPHSLANAAAYQQQQQLQLAMANPTAYVQQQLLLSNPQAATNAATYLQQQQFQQILPALSQLAMANPTAYLQQQQLLPINQLALANTDAYLQQQQLLPVNPLVVANPLVAAFLQQQQLSSFNQISLVNPALSWQQPIIGGAIF.

The first 19 residues, threonine 1 to alanine 19, serve as a signal peptide directing secretion.

The protein belongs to the zein family.

Functionally, major seed storage prolamin. In Sorghum bicolor (Sorghum), this protein is Kafirin PSK8.